The primary structure comprises 165 residues: MRKAVCPGSFDPVTNGHLDIISRAAALYDEVTVAVLVNKAKRALFSVEERMDMVREATAQYPNVVVESFSGLLVDFCRARGIPVIIKGLRAVSDFDYELQMAQMNHSLAGVETLFLSTNPLYSFLSSSLVKEVAAYGGDVSTLIPDSVARRLRTRLFDPSREPDH.

Ser9 serves as a coordination point for substrate. ATP is bound by residues 9–10 (SF) and His17. The substrate site is built by Lys41, Leu73, and Lys87. ATP-binding positions include 88-90 (GLR), Glu98, and 122-128 (YSFLSSS).

It belongs to the bacterial CoaD family. As to quaternary structure, homohexamer. Mg(2+) is required as a cofactor.

It is found in the cytoplasm. The catalysed reaction is (R)-4'-phosphopantetheine + ATP + H(+) = 3'-dephospho-CoA + diphosphate. Its pathway is cofactor biosynthesis; coenzyme A biosynthesis; CoA from (R)-pantothenate: step 4/5. Its function is as follows. Reversibly transfers an adenylyl group from ATP to 4'-phosphopantetheine, yielding dephospho-CoA (dPCoA) and pyrophosphate. The chain is Phosphopantetheine adenylyltransferase from Acidothermus cellulolyticus (strain ATCC 43068 / DSM 8971 / 11B).